The following is a 165-amino-acid chain: UPF0178 protein Bphyt_5655 (165 aa).

2 disordered regions span residues 115-134 and 139-165; these read LRGS…RDSK and ELDR…PPTE.

This sequence belongs to the UPF0178 family.

The chain is UPF0178 protein Bphyt_5655 from Paraburkholderia phytofirmans (strain DSM 17436 / LMG 22146 / PsJN) (Burkholderia phytofirmans).